The chain runs to 334 residues: UDP-N-acetylglucosamine 4,6-dehydratase (inverting) (334 aa).

Residues 13-16 (TGSF), 37-42 (SRDELK), 61-62 (DV), Ala-81, Lys-85, and 123-124 (LS) contribute to the NADP(+) site. Residue Lys-85 coordinates substrate. The active site involves Lys-127. Residues Tyr-135 and Lys-139 each coordinate NADP(+). Asn-167 is a binding site for substrate. 168-172 (VVGSR) contacts NADP(+). Val-175, Thr-193, Arg-252, and Glu-255 together coordinate substrate.

The protein belongs to the polysaccharide synthase family. Homohexamer. It depends on NADP(+) as a cofactor.

It carries out the reaction UDP-N-acetyl-alpha-D-glucosamine = UDP-2-acetamido-2,6-dideoxy-beta-L-arabino-hex-4-ulose + H2O. Catalyzes the first step in the biosynthesis of pseudaminic acid, a sialic-acid-like sugar that is used to modify flagellin. Has both C6 dehydratase and C5 epimerase activities that result in the production of both UDP-2-acetamido-2,6-dideoxy-beta-L-arabino-4-hexulose and UDP-2-acetamido-2,6-dideoxy-alpha-D-xylo-4-hexulose. This is UDP-N-acetylglucosamine 4,6-dehydratase (inverting) (pseB) from Campylobacter jejuni subsp. jejuni serotype O:2 (strain ATCC 700819 / NCTC 11168).